The following is a 209-amino-acid chain: Large ribosomal subunit protein uL4 (209 aa).

The tract at residues 50-89 is disordered; sequence MTKTKGLVSGGGKKPFKQKGTGGARQGSSRSILMPGGGTA.

Belongs to the universal ribosomal protein uL4 family. As to quaternary structure, part of the 50S ribosomal subunit.

Its function is as follows. One of the primary rRNA binding proteins, this protein initially binds near the 5'-end of the 23S rRNA. It is important during the early stages of 50S assembly. It makes multiple contacts with different domains of the 23S rRNA in the assembled 50S subunit and ribosome. Functionally, forms part of the polypeptide exit tunnel. This is Large ribosomal subunit protein uL4 from Bdellovibrio bacteriovorus (strain ATCC 15356 / DSM 50701 / NCIMB 9529 / HD100).